A 345-amino-acid polypeptide reads, in one-letter code: PI-PLC X domain-containing protein 1 (345 aa).

The PI-PLC X-box domain occupies 52–228; that stretch reads QLWDVPLHHL…QVIVSYEDEA (177 aa).

Expressed at highest levels in brain and kidney. Also detected in stomach, thymus and skeletal muscle.

It localises to the cytoplasm. The polypeptide is PI-PLC X domain-containing protein 1 (Plcxd1) (Mus musculus (Mouse)).